Reading from the N-terminus, the 150-residue chain is D-aminoacyl-tRNA deacylase (150 aa).

Residues 137 to 138 (GP) carry the Gly-cisPro motif, important for rejection of L-amino acids motif.

The protein belongs to the DTD family. In terms of assembly, homodimer.

The protein resides in the cytoplasm. The enzyme catalyses glycyl-tRNA(Ala) + H2O = tRNA(Ala) + glycine + H(+). It catalyses the reaction a D-aminoacyl-tRNA + H2O = a tRNA + a D-alpha-amino acid + H(+). In terms of biological role, an aminoacyl-tRNA editing enzyme that deacylates mischarged D-aminoacyl-tRNAs. Also deacylates mischarged glycyl-tRNA(Ala), protecting cells against glycine mischarging by AlaRS. Acts via tRNA-based rather than protein-based catalysis; rejects L-amino acids rather than detecting D-amino acids in the active site. By recycling D-aminoacyl-tRNA to D-amino acids and free tRNA molecules, this enzyme counteracts the toxicity associated with the formation of D-aminoacyl-tRNA entities in vivo and helps enforce protein L-homochirality. The chain is D-aminoacyl-tRNA deacylase from Listeria monocytogenes serotype 4b (strain CLIP80459).